The primary structure comprises 247 residues: ATP synthase subunit a, chloroplastic (247 aa).

5 helical membrane passes run 38-58 (QVLI…IIAV), 95-115 (VPFI…GALL), 134-154 (INTT…AGLT), 199-219 (LVVV…VMFL), and 220-240 (GLFT…AYIG).

The protein belongs to the ATPase A chain family. As to quaternary structure, F-type ATPases have 2 components, CF(1) - the catalytic core - and CF(0) - the membrane proton channel. CF(1) has five subunits: alpha(3), beta(3), gamma(1), delta(1), epsilon(1). CF(0) has four main subunits: a, b, b' and c.

The protein resides in the plastid. Its subcellular location is the chloroplast thylakoid membrane. In terms of biological role, key component of the proton channel; it plays a direct role in the translocation of protons across the membrane. The protein is ATP synthase subunit a, chloroplastic of Ranunculus macranthus (Large buttercup).